A 537-amino-acid polypeptide reads, in one-letter code: LEQSSRYADLTLDEAGSLRNGEHVLVAYIMKPKMGYDYLATAAHFAAESCTGARSTDDAKESANAVVYYIDADSQEMRIAYPTVLFDSNLTDGRDMVRSFLTLAIGNTQGMEDVEFGKIYDFYLPPSFLRLQESPSVNTMWRILDKGASNGGLAAGAMKPKLGMQPKPFRAASYALWQGGAYTTADVQANQAPTQASEGIPEVVKAMRSCVQGTDVAKRHSGGNYTDEPKEMDARGKYVLSQFGPFSGNCVSLVAGYAAGGSARHTFPRQFVHYHRAGQASTSSPQTQRGYSAFVHTKISQVISTTSIHADTMSFGKTQGDSPDKSIAVMLQDDAADARLCNQEWEGMRQNAPIISGSMNALRLPAFFETLGNSNVILTADSGSFGHKDGPASGAIACRQVEEAWKAWRSGQYGNVSLSDGVVEFAKTHEEIKGAFLTFPKDADEIYPGWKEKLGCTAEASVPPASFVNAKISTASSAAVATARTTMNAAKMASQSTAGSAVNPYTGGLKSIHPASSSNTARTVLLSRQGREAALQD.

It belongs to the RuBisCO large chain family. Type IV subfamily.

Functionally, unknown. Probably does not have RuBisCO activity. This is an uncharacterized protein from Symbiodinium sp. (Dinoflagellate).